The primary structure comprises 833 residues: DNA polymerase I, thermostable (833 aa).

One can recognise a 5'-3' exonuclease domain in the interval 173–267; it reads VPPERWVDFR…FKALRRRTPD (95 aa). The polymerase stretch occupies residues 412 to 833; it reads ERLFQNLFPR…GRDWLEAKQD (422 aa).

This sequence belongs to the DNA polymerase type-A family.

It carries out the reaction DNA(n) + a 2'-deoxyribonucleoside 5'-triphosphate = DNA(n+1) + diphosphate. In addition to polymerase activity, this DNA polymerase exhibits 5'-3' exonuclease activity. Unlikely to have 3'-5' exonuclease activity due to absence of a 3'-5' exonuclease domain. The protein is DNA polymerase I, thermostable (polA) of Thermus filiformis.